A 457-amino-acid chain; its full sequence is Argininosuccinate lyase (457 aa).

This sequence belongs to the lyase 1 family. Argininosuccinate lyase subfamily.

Its subcellular location is the cytoplasm. The catalysed reaction is 2-(N(omega)-L-arginino)succinate = fumarate + L-arginine. Its pathway is amino-acid biosynthesis; L-arginine biosynthesis; L-arginine from L-ornithine and carbamoyl phosphate: step 3/3. The polypeptide is Argininosuccinate lyase (Bacillus pumilus (strain SAFR-032)).